Here is a 306-residue protein sequence, read N- to C-terminus: Proline-rich transmembrane protein 1 (306 aa).

Residues 1–142 (MSSEKSGLPD…PPPAPAQTAQ (142 aa)) form a disordered region. Residues 1 to 223 (MSSEKSGLPD…LEPRRPPHDY (223 aa)) lie on the Cytoplasmic side of the membrane. The segment covering 15-36 (TSPPPYNAPQPPAEPPAPPPQA) has biased composition (pro residues). Over residues 40–49 (SHHHHHHHYH) the composition is skewed to basic residues. Pro residues-rich tracts occupy residues 87-111 (HAPP…PPDP) and 121-137 (PLPP…PPAP). Residues 224-244 (MPIAVLTTICCFWPTGIIAIF) form a helical membrane-spanning segment. The Extracellular portion of the chain corresponds to 245 to 275 (KAVQVRTALARGDMVSAEIASREARNFSFIS). An intramembrane region (helical) is located at residues 276–296 (LAVGIAAMVLCTILTVVIIIA). Residues 297–306 (AQHHENYWDP) are Extracellular-facing.

This sequence belongs to the CD225/Dispanin family. As to quaternary structure, component of the outer core of AMPAR complex. AMPAR complex consists of an inner core made of 4 pore-forming GluA/GRIA proteins (GRIA1, GRIA2, GRIA3 and GRIA4) and 4 major auxiliary subunits arranged in a twofold symmetry. One of the two pairs of distinct binding sites is occupied either by CNIH2, CNIH3 or CACNG2, CACNG3. The other harbors CACNG2, CACNG3, CACNG4, CACNG8 or GSG1L. This inner core of AMPAR complex is complemented by outer core constituents binding directly to the GluA/GRIA proteins at sites distinct from the interaction sites of the inner core constituents. Outer core constituents include at least PRRT1, PRRT2, CKAMP44/SHISA9, FRRS1L and NRN1. The proteins of the inner and outer core serve as a platform for other, more peripherally associated AMPAR constituents. Alone or in combination, these auxiliary subunits control the gating and pharmacology of the AMPAR complex and profoundly impact their biogenesis and protein processing.

The protein resides in the cell membrane. Its subcellular location is the synapse. Required to maintain a pool of extrasynaptic AMPA-regulated glutamate receptors (AMPAR) which is necessary for synapse development and function. Regulates basal AMPAR function and synaptic transmission during development but is dispensable at mature hippocampal synapses. Plays a role in regulating basal phosphorylation levels of glutamate receptor GRIA1 and promotes GRIA1 and GRIA2 cell surface expression. This chain is Proline-rich transmembrane protein 1, found in Homo sapiens (Human).